The chain runs to 184 residues: MDKEKIEQAVSMIIEAIGEDPNREGLLETPQRVARMYEEIFSGLNQDAKTHLSKSFEIVDDNMVIEKDIPFYSMCEHHLLPFWGKVNIAYIPNKRVAGLSKLARTVDVYSKKPQLQERLNIEIADALMEYLNCKGCLVTIEAEHMCMNMRGVKKPGTSTMTSVARGAFEEDLDLKNEAYRLMGL.

Residues C75, H78, and C146 each contribute to the Zn(2+) site.

Belongs to the GTP cyclohydrolase I family. Homomer.

The catalysed reaction is GTP + H2O = 7,8-dihydroneopterin 3'-triphosphate + formate + H(+). The protein operates within cofactor biosynthesis; 7,8-dihydroneopterin triphosphate biosynthesis; 7,8-dihydroneopterin triphosphate from GTP: step 1/1. The sequence is that of GTP cyclohydrolase 1 from Finegoldia magna (strain ATCC 29328 / DSM 20472 / WAL 2508) (Peptostreptococcus magnus).